The following is a 688-amino-acid chain: G protein-coupled receptor kinase 3 (688 aa).

The tract at residues 1 to 190 (MADLEAVLAD…ELNIHLTMND (190 aa)) is N-terminal. The RGS domain occupies 54 to 175 (TFDKIFNQRI…MESDKFTRFC (122 aa)). Residues 191–453 (FSVHRIIGRG…AQELKTHDFF (263 aa)) form the Protein kinase domain. Residues 197-205 (IGRGGFGEV) and lysine 220 contribute to the ATP site. Aspartate 317 acts as the Proton acceptor in catalysis. The AGC-kinase C-terminal domain occupies 454–521 (RGIDWQHVYL…VISERWQQEV (68 aa)). The PH domain occupies 558–652 (DCIVHGYMLK…WKKELTETFM (95 aa)).

This sequence belongs to the protein kinase superfamily. AGC Ser/Thr protein kinase family. GPRK subfamily. As to quaternary structure, interacts with GIT1. Post-translationally, ubiquitinated. Ubiquitous; brain, spleen &gt; heart, lung &gt; kidney.

It is found in the postsynapse. It localises to the presynapse. It catalyses the reaction [beta-adrenergic receptor] + ATP = [beta-adrenergic receptor]-phosphate + ADP + H(+). Functionally, specifically phosphorylates the agonist-occupied form of the beta-adrenergic and closely related receptors. The sequence is that of G protein-coupled receptor kinase 3 from Bos taurus (Bovine).